We begin with the raw amino-acid sequence, 673 residues long: DNA ligase (673 aa).

NAD(+)-binding positions include 33 to 37 (DAEYD), 82 to 83 (SL), and Glu-114. Lys-116 (N6-AMP-lysine intermediate) is an active-site residue. 4 residues coordinate NAD(+): Arg-137, Glu-174, Lys-291, and Lys-315. Residues Cys-409, Cys-412, Cys-427, and Cys-433 each contribute to the Zn(2+) site. Positions 592–673 (AQEQPLAGLV…LINLLEQHNG (82 aa)) constitute a BRCT domain.

The protein belongs to the NAD-dependent DNA ligase family. LigA subfamily. The cofactor is Mg(2+). Mn(2+) is required as a cofactor.

The enzyme catalyses NAD(+) + (deoxyribonucleotide)n-3'-hydroxyl + 5'-phospho-(deoxyribonucleotide)m = (deoxyribonucleotide)n+m + AMP + beta-nicotinamide D-nucleotide.. Its function is as follows. DNA ligase that catalyzes the formation of phosphodiester linkages between 5'-phosphoryl and 3'-hydroxyl groups in double-stranded DNA using NAD as a coenzyme and as the energy source for the reaction. It is essential for DNA replication and repair of damaged DNA. The protein is DNA ligase of Pseudoalteromonas translucida (strain TAC 125).